Reading from the N-terminus, the 295-residue chain is Acetylglutamate kinase (295 aa).

Substrate contacts are provided by residues 66–67, arginine 88, and asparagine 193; that span reads GG.

The protein belongs to the acetylglutamate kinase family. ArgB subfamily.

The protein localises to the cytoplasm. The catalysed reaction is N-acetyl-L-glutamate + ATP = N-acetyl-L-glutamyl 5-phosphate + ADP. It functions in the pathway amino-acid biosynthesis; L-arginine biosynthesis; N(2)-acetyl-L-ornithine from L-glutamate: step 2/4. Functionally, catalyzes the ATP-dependent phosphorylation of N-acetyl-L-glutamate. The chain is Acetylglutamate kinase from Allorhizobium ampelinum (strain ATCC BAA-846 / DSM 112012 / S4) (Agrobacterium vitis (strain S4)).